The primary structure comprises 432 residues: Adenylosuccinate synthetase (432 aa).

Residues 13–19 and 41–43 contribute to the GTP site; these read GDEGKGK and GHT. Asp-14 (proton acceptor) is an active-site residue. Mg(2+) is bound by residues Asp-14 and Gly-41. IMP is bound by residues 14–17, 39–42, Thr-130, Arg-144, Gln-225, Thr-240, and Arg-304; these read DEGK and NAGH. Residue His-42 is the Proton donor of the active site. Residue 300–306 coordinates substrate; it reads ATTGRKR. GTP-binding positions include Arg-306, 332–334, and 415–417; these read KLD and STG.

This sequence belongs to the adenylosuccinate synthetase family. As to quaternary structure, homodimer. Requires Mg(2+) as cofactor.

It is found in the cytoplasm. It catalyses the reaction IMP + L-aspartate + GTP = N(6)-(1,2-dicarboxyethyl)-AMP + GDP + phosphate + 2 H(+). It functions in the pathway purine metabolism; AMP biosynthesis via de novo pathway; AMP from IMP: step 1/2. Its function is as follows. Plays an important role in the de novo pathway of purine nucleotide biosynthesis. Catalyzes the first committed step in the biosynthesis of AMP from IMP. The polypeptide is Adenylosuccinate synthetase (Pseudoalteromonas atlantica (strain T6c / ATCC BAA-1087)).